The sequence spans 404 residues: Tryptophan synthase beta chain (404 aa).

N6-(pyridoxal phosphate)lysine is present on lysine 98.

This sequence belongs to the TrpB family. Tetramer of two alpha and two beta chains. Pyridoxal 5'-phosphate serves as cofactor.

The catalysed reaction is (1S,2R)-1-C-(indol-3-yl)glycerol 3-phosphate + L-serine = D-glyceraldehyde 3-phosphate + L-tryptophan + H2O. It participates in amino-acid biosynthesis; L-tryptophan biosynthesis; L-tryptophan from chorismate: step 5/5. Functionally, the beta subunit is responsible for the synthesis of L-tryptophan from indole and L-serine. This chain is Tryptophan synthase beta chain, found in Acidiphilium cryptum (strain JF-5).